Here is a 434-residue protein sequence, read N- to C-terminus: Trigger factor (434 aa).

Positions 160–245 (GDKVKMNFVG…LTEVQAAQLP (86 aa)) constitute a PPIase FKBP-type domain.

The protein belongs to the FKBP-type PPIase family. Tig subfamily.

It localises to the cytoplasm. The enzyme catalyses [protein]-peptidylproline (omega=180) = [protein]-peptidylproline (omega=0). Functionally, involved in protein export. Acts as a chaperone by maintaining the newly synthesized protein in an open conformation. Functions as a peptidyl-prolyl cis-trans isomerase. The sequence is that of Trigger factor from Shewanella denitrificans (strain OS217 / ATCC BAA-1090 / DSM 15013).